Reading from the N-terminus, the 560-residue chain is Thermosome subunit 1 (560 aa).

Residues 525–550 are disordered; sequence LSGGQTGSDDDDGGAPGGMGGGMGGM. Gly residues predominate over residues 538–550; it reads GAPGGMGGGMGGM.

It belongs to the TCP-1 chaperonin family. In terms of assembly, the thermosome or CCT complex is a oligomeric complex of two octameric double-ring structures; the complex is probably a heterooligomer of CCT1, CCT2 and CCT3 with yet unknown stoichiometry.

In terms of biological role, molecular chaperone that assists in the folding or refolding of nascent or denatured proteins along with ATP hydrolysis. ATPase activity is highest in thermosome assemblies containing CCT1:CCT2, followed by assemblies containing CCT1:CCT2:CCT3. Required for thermosome ATPase activity. Not required for growth. The polypeptide is Thermosome subunit 1 (cct1) (Haloferax volcanii (strain ATCC 29605 / DSM 3757 / JCM 8879 / NBRC 14742 / NCIMB 2012 / VKM B-1768 / DS2) (Halobacterium volcanii)).